A 43-amino-acid polypeptide reads, in one-letter code: Protein PsbN (43 aa).

A helical transmembrane segment spans residues 5-27; the sequence is TLVAISISGLLVSFTGYALYTAF.

This sequence belongs to the PsbN family.

Its subcellular location is the plastid. The protein resides in the chloroplast thylakoid membrane. May play a role in photosystem I and II biogenesis. This Eucalyptus globulus subsp. globulus (Tasmanian blue gum) protein is Protein PsbN.